Here is an 828-residue protein sequence, read N- to C-terminus: ADP-ribosylation factor GTPase-activating protein AGD1 (828 aa).

In terms of domain architecture, BAR spans 1–225 (MHFAKLDDSP…INQVLAYAHQ (225 aa)). Positions 225–255 (QSRECANYEMASLNERMQEYQRQVDRETRNS) form a coiled coil. The tract at residues 247-268 (QVDRETRNSCVSPTGDGMRHNS) is disordered. Residues 288–425 (QTIRQGYLSK…WIEKITGVIA (138 aa)) enclose the PH domain. Ser-441 is subject to Phosphoserine. The 146-residue stretch at 498-643 (EKPIDVLTRV…IFVRKAIDSQ (146 aa)) folds into the Arf-GAP domain. The C4-type zinc-finger motif lies at 513-536 (CADCGAPEPDWASLNLGVLICIEC). Residues 590–600 (TSSASRSSGTP) are compositionally biased toward low complexity. Positions 590-611 (TSSASRSSGTPKSDRPRKLLVR) are disordered. ANK repeat units follow at residues 735 to 764 (NDCS…KINA) and 768 to 797 (KGRT…DPNA).

As to expression, expressed in roots, but not in hypocotyls or cotyledons. Low levels detected in leaf and shoot apical meristems and in siliques.

It is found in the endosome. Probable GTPase-activating protein. Regulator of membrane trafficking. Required for maintaining a straight growth of root hairs. This Arabidopsis thaliana (Mouse-ear cress) protein is ADP-ribosylation factor GTPase-activating protein AGD1 (AGD1).